A 205-amino-acid chain; its full sequence is Gap junction epsilon-1 protein (205 aa).

The Cytoplasmic segment spans residues 1–22; it reads MSLNYIKNFYEGCVKPPTVIGQ. A helical transmembrane segment spans residues 23–43; sequence FHTLFFGSVRMFFLGVLGFAV. Topologically, residues 44–74 are extracellular; sequence YGNEALHFSCDPDKREINLFCYNQFRPITPQ. Intrachain disulfides connect Cys-53-Cys-161 and Cys-64-Cys-147. Residues 75–95 traverse the membrane as a helical segment; it reads VFWALQLVIVLLPGAIFHLYA. The Cytoplasmic portion of the chain corresponds to 96-111; it reads ACKSINQDCILQKPVY. A helical membrane pass occupies residues 112–132; it reads TVIYVLSVLLRISLEVFAFWL. The Extracellular segment spans residues 133 to 170; it reads QIHLFGFQVKPIYLCDTESLGKKPNILKCMVPEHFEKT. A helical membrane pass occupies residues 171–191; that stretch reads IFLIAMYTFTVITMVLCVAEV. Topologically, residues 192-205 are cytoplasmic; that stretch reads FEIIFRRSCFLFKR.

This sequence belongs to the connexin family. Beta-type (group I) subfamily. As to quaternary structure, a connexon is composed of a hexamer of connexins. In terms of tissue distribution, highly expressed in lens, where it is mainly found in lens fibers and to a lesser extent in lens epithelium. Weakly expressed in retina. Not detected in other tissues tested.

The protein resides in the cell membrane. Its function is as follows. Mediates calcium-independent ATP release, suggesting activity as a hemichannel. Does not form functional gap junctions. May play a non-essential role in eye lens development. The sequence is that of Gap junction epsilon-1 protein from Mus musculus (Mouse).